A 557-amino-acid polypeptide reads, in one-letter code: Interferon alpha/beta receptor 1 (557 aa).

The first 27 residues, 1–27 (MMVVLLGATTLVLVAVAPWVLSAAAGG), serve as a signal peptide directing secretion. Topologically, residues 28–436 (KNLKSPQKVE…EKTKPGNTSK (409 aa)) are extracellular. Fibronectin type-III domains follow at residues 32-126 (SPQK…FRKA), 127-227 (QIGP…TVEN), 231-329 (PPEN…TEIQ), and 331-432 (FLLP…TKPG). 6 N-linked (GlcNAc...) asparagine glycosylation sites follow: N50, N58, N81, N88, N110, and N172. C79 and C87 are oxidised to a cystine. Cysteines 199 and 220 form a disulfide. The N-linked (GlcNAc...) asparagine glycan is linked to N254. The cysteines at positions 283 and 291 are disulfide-linked. N-linked (GlcNAc...) asparagine glycans are attached at residues N313, N314, N376, N416, and N433. A disulfide bridge connects residues C403 and C426. Residues 437 to 457 (IWLIVGICIALFALPFVIYAA) traverse the membrane as a helical segment. At 458 to 557 (KVFLRCINYV…TSEELQQDFV (100 aa)) the chain is on the cytoplasmic side. The S-palmitoyl cysteine moiety is linked to residue C463. Residues Y466 and Y481 each carry the phosphotyrosine; by TYK2 modification. An important for interaction with TYK2 region spans residues 491–500 (LLSTSEEQIE). Phosphoserine is present on S495. Glycyl lysine isopeptide (Lys-Gly) (interchain with G-Cter in ubiquitin) cross-links involve residues K501, K525, and K526. The interval 516 to 557 (ETNQTDEDHKKYSSQTSQDSGNYSNEDESESKTSEELQQDFV) is disordered. Residues 528-539 (SSQTSQDSGNYS) show a composition bias toward polar residues. S535 carries the post-translational modification Phosphoserine.

The protein belongs to the type II cytokine receptor family. In terms of assembly, heterodimer with IFNAR2; forming the receptor for type I interferon. Interacts with TYK2. Interacts with STAT1 and STAT2; the interaction requires its phosphorylation at Tyr-466. Interacts (serine-phosphorylated form) with FBXW11, the substrate recognition component of a SCF (SKP1-CUL1-F-box protein) E3 ubiquitin-protein ligase complex. Interacts with SHMT2; this promotes interaction with ABRAXAS2 and the BRISC complex. Interacts with TRIM10; this interaction prevents association between IFNAR1 and TYK2. Post-translationally, ubiquitinated, leading to its internalization and degradation. Polyubiquitinated via 'Lys-48'-linked and 'Lys-63'-linked ubiquitin chains, leading to receptor internalization and lysosomal degradation. The 'Lys-63'-linked ubiquitin chains are cleaved off by the BRISC complex. Phosphorylated on tyrosine residues in response to interferon-binding: phosphorylation by TYK2 tyrosine kinase creates docking sites for STAT proteins. Phosphorylated on serine residues in response to interferon binding; this promotes interaction with FBXW11 and ubiquitination. In terms of processing, palmitoylation at Cys-463 is required for the activation of STAT1 and STAT2. In terms of tissue distribution, IFN receptors are present in all tissues and even on the surface of most IFN-resistant cells. Isoform 1, isoform 2 and isoform 3 are expressed in the IFN-alpha sensitive myeloma cell line U266B1. Isoform 2 and isoform 3 are expressed in the IFN-alpha resistant myeloma cell line U266R. Isoform 1 is not expressed in IFN-alpha resistant myeloma cell line U266R.

The protein resides in the cell membrane. It localises to the late endosome. The protein localises to the lysosome. Functionally, together with IFNAR2, forms the heterodimeric receptor for type I interferons (including interferons alpha, beta, epsilon, omega and kappa). Type I interferon binding activates the JAK-STAT signaling cascade, resulting in transcriptional activation or repression of interferon-regulated genes that encode the effectors of the interferon response. Mechanistically, type I interferon-binding brings the IFNAR1 and IFNAR2 subunits into close proximity with one another, driving their associated Janus kinases (JAKs) (TYK2 bound to IFNAR1 and JAK1 bound to IFNAR2) to cross-phosphorylate one another. The activated kinases phosphorylate specific tyrosine residues on the intracellular domains of IFNAR1 and IFNAR2, forming docking sites for the STAT transcription factors. STAT proteins are then phosphorylated by the JAKs, promoting their translocation into the nucleus to regulate expression of interferon-regulated genes. Can also act independently of IFNAR2: form an active IFNB1 receptor by itself and activate a signaling cascade that does not involve activation of the JAK-STAT pathway. In Homo sapiens (Human), this protein is Interferon alpha/beta receptor 1 (IFNAR1).